Consider the following 309-residue polypeptide: Olfactory receptor 8A1 (309 aa).

Residues 1–28 (MTAENQSTVTEFILGGLTNRPELQLPLF) lie on the Extracellular side of the membrane. A helical transmembrane segment spans residues 29 to 49 (LLFLGIYVVTMVGNLGMITLI). At 50-56 (GLNSQLH) the chain is on the cytoplasmic side. Residues 57-77 (TPMYFFLSNLSLVDLCYSSVI) traverse the membrane as a helical segment. The Extracellular portion of the chain corresponds to 78–90 (TPKMLINFVSQRN). A helical membrane pass occupies residues 91-111 (LISYVGCMSQLYFFLVFVIAE). The cysteines at positions 97 and 188 are disulfide-linked. The Cytoplasmic portion of the chain corresponds to 112-133 (CYMLTVMAYDRYVAICQPLLYN). The helical transmembrane segment at 134–154 (IIMSPALCSLLVAFVYAVGLI) threads the bilayer. Residues 155–195 (GSAIETGLMLKLNYCEDLISHYFCDILPLMKLSCSSTYDVE) lie on the Extracellular side of the membrane. A helical membrane pass occupies residues 196–216 (MAVFFLAGFDIIVTSLTVLIS). The Cytoplasmic portion of the chain corresponds to 217 to 238 (YAFILSSILRISSNEGRSKAFS). Residues 239 to 259 (TCSSHFAAVGLFYGSTAFMYL) traverse the membrane as a helical segment. Topologically, residues 260 to 270 (KPSTASSLAQE) are extracellular. The chain crosses the membrane as a helical span at residues 271 to 291 (NVASVFYTTVIPMFNPLIYSL). The Cytoplasmic portion of the chain corresponds to 292–309 (RNKEVKTALDKTLRRKVF).

Belongs to the G-protein coupled receptor 1 family.

The protein localises to the cell membrane. Its function is as follows. Odorant receptor. This chain is Olfactory receptor 8A1, found in Mus musculus (Mouse).